The primary structure comprises 494 residues: 4-trimethylaminobutyraldehyde dehydrogenase (494 aa).

Position 2 is an N-acetylserine (Ser2). Lys30 carries the N6-acetyllysine; alternate modification. At Lys30 the chain carries N6-succinyllysine; alternate. Lys59 carries the N6-succinyllysine modification. NAD(+)-binding positions include Lys180 and 232–236 (GSVPT). The active-site Proton acceptor is Glu254. Cys288 acts as the Nucleophile in catalysis. N6-acetyllysine is present on Lys298. Lys303 carries the post-translational modification N6-acetyllysine; alternate. N6-succinyllysine; alternate is present on Lys303. Lys344 carries the post-translational modification N6-acetyllysine. Glu391 provides a ligand contact to NAD(+).

The protein belongs to the aldehyde dehydrogenase family. As to quaternary structure, homotetramer.

It is found in the cytoplasm. The protein resides in the cytosol. The enzyme catalyses 4-(trimethylamino)butanal + NAD(+) + H2O = 4-(trimethylamino)butanoate + NADH + 2 H(+). It carries out the reaction an aldehyde + NAD(+) + H2O = a carboxylate + NADH + 2 H(+). It catalyses the reaction 4-aminobutanal + NAD(+) + H2O = 4-aminobutanoate + NADH + 2 H(+). The catalysed reaction is formaldehyde + NAD(+) + H2O = formate + NADH + 2 H(+). The enzyme catalyses acetaldehyde + NAD(+) + H2O = acetate + NADH + 2 H(+). It carries out the reaction imidazole-4-acetaldehyde + NAD(+) + H2O = imidazole-4-acetate + NADH + 2 H(+). It catalyses the reaction acrolein + NAD(+) + H2O = acrylate + NADH + 2 H(+). The catalysed reaction is (5-hydroxyindol-3-yl)acetaldehyde + NAD(+) + H2O = (5-hydroxyindol-3-yl)acetate + NADH + 2 H(+). The enzyme catalyses 3,4-dihydroxyphenylacetaldehyde + NAD(+) + H2O = 3,4-dihydroxyphenylacetate + NADH + 2 H(+). It carries out the reaction spermine monoaldehyde + NAD(+) + H2O = N-(2-carboxyethyl)spermidine + NADH + 2 H(+). It catalyses the reaction propanal + NAD(+) + H2O = propanoate + NADH + 2 H(+). The catalysed reaction is butanal + NAD(+) + H2O = butanoate + NADH + 2 H(+). The enzyme catalyses pentanal + NAD(+) + H2O = pentanoate + NADH + 2 H(+). It carries out the reaction hexanal + NAD(+) + H2O = hexanoate + NADH + 2 H(+). It participates in amine and polyamine biosynthesis; carnitine biosynthesis. In terms of biological role, converts gamma-trimethylaminobutyraldehyde into gamma-butyrobetaine with high efficiency (in vitro). Can catalyze the irreversible oxidation of a broad range of aldehydes to the corresponding acids in an NAD-dependent reaction, but with low efficiency. Catalyzes the oxidation of aldehydes arising from biogenic amines and polyamines. The chain is 4-trimethylaminobutyraldehyde dehydrogenase (ALDH9A1) from Sus scrofa (Pig).